A 289-amino-acid polypeptide reads, in one-letter code: 4-diphosphocytidyl-2-C-methyl-D-erythritol kinase (289 aa).

K13 is an active-site residue. 101 to 111 serves as a coordination point for ATP; sequence PMGGGLGGGSS. D143 is an active-site residue.

The protein belongs to the GHMP kinase family. IspE subfamily.

It carries out the reaction 4-CDP-2-C-methyl-D-erythritol + ATP = 4-CDP-2-C-methyl-D-erythritol 2-phosphate + ADP + H(+). It participates in isoprenoid biosynthesis; isopentenyl diphosphate biosynthesis via DXP pathway; isopentenyl diphosphate from 1-deoxy-D-xylulose 5-phosphate: step 3/6. Its function is as follows. Catalyzes the phosphorylation of the position 2 hydroxy group of 4-diphosphocytidyl-2C-methyl-D-erythritol. This Janthinobacterium sp. (strain Marseille) (Minibacterium massiliensis) protein is 4-diphosphocytidyl-2-C-methyl-D-erythritol kinase.